Reading from the N-terminus, the 122-residue chain is Large ribosomal subunit protein uL14 (122 aa).

Belongs to the universal ribosomal protein uL14 family. In terms of assembly, part of the 50S ribosomal subunit. Forms a cluster with proteins L3 and L19. In the 70S ribosome, L14 and L19 interact and together make contacts with the 16S rRNA in bridges B5 and B8.

Its function is as follows. Binds to 23S rRNA. Forms part of two intersubunit bridges in the 70S ribosome. In Leuconostoc citreum (strain KM20), this protein is Large ribosomal subunit protein uL14.